A 91-amino-acid polypeptide reads, in one-letter code: PqqA binding protein 1 (91 aa).

This sequence belongs to the PqqD family. As to quaternary structure, monomer. Interacts with PqqE.

Its pathway is cofactor biosynthesis; pyrroloquinoline quinone biosynthesis. Functionally, functions as a PqqA binding protein and presents PqqA to PqqE, in the pyrroloquinoline quinone (PQQ) biosynthetic pathway. The chain is PqqA binding protein 1 (pqqD1) from Pseudomonas putida (strain ATCC 47054 / DSM 6125 / CFBP 8728 / NCIMB 11950 / KT2440).